The following is a 207-amino-acid chain: Histidine biosynthesis bifunctional protein HisIE (207 aa).

The segment at 1–117 (MQNFKELNEK…KISKNADFVF (117 aa)) is phosphoribosyl-AMP cyclohydrolase. Residues 118–207 (LARLEKLINA…ISKLKERHKA (90 aa)) form a phosphoribosyl-ATP pyrophosphohydrolase region.

The protein in the N-terminal section; belongs to the PRA-CH family. It in the C-terminal section; belongs to the PRA-PH family.

Its subcellular location is the cytoplasm. The enzyme catalyses 1-(5-phospho-beta-D-ribosyl)-ATP + H2O = 1-(5-phospho-beta-D-ribosyl)-5'-AMP + diphosphate + H(+). The catalysed reaction is 1-(5-phospho-beta-D-ribosyl)-5'-AMP + H2O = 1-(5-phospho-beta-D-ribosyl)-5-[(5-phospho-beta-D-ribosylamino)methylideneamino]imidazole-4-carboxamide. It functions in the pathway amino-acid biosynthesis; L-histidine biosynthesis; L-histidine from 5-phospho-alpha-D-ribose 1-diphosphate: step 2/9. It participates in amino-acid biosynthesis; L-histidine biosynthesis; L-histidine from 5-phospho-alpha-D-ribose 1-diphosphate: step 3/9. The sequence is that of Histidine biosynthesis bifunctional protein HisIE (hisI) from Campylobacter jejuni subsp. jejuni serotype O:2 (strain ATCC 700819 / NCTC 11168).